A 567-amino-acid polypeptide reads, in one-letter code: Microtubule-associated protein 70-1 (567 aa).

A coiled-coil region spans residues 38 to 341 (VRVELTRLEN…AARSEAQLKD (304 aa)). Residues 220–440 (ILDRMHRQKV…SGMNVSTDSS (221 aa)) are required for targeting to microtubules. Disordered stretches follow at residues 425 to 457 (KGHVNGSGMNVSTDSSEDKESNNSDEKANEFTS) and 534 to 567 (LEKEQDNKAKRFGSSSSQLPPGRTLPRSGSARNM). The span at 440–453 (SEDKESNNSDEKAN) shows a compositional bias: basic and acidic residues. Residues 516-545 (KKRRMEVAAMEKEMAALRLEKEQDNKAKRF) are a coiled coil.

The protein belongs to the MAP70 family.

It is found in the cytoplasm. It localises to the cytoskeleton. In terms of biological role, plant-specific protein that interact with microtubules. This Oryza sativa subsp. japonica (Rice) protein is Microtubule-associated protein 70-1 (MAP70.1).